We begin with the raw amino-acid sequence, 1905 residues long: MNKQYFLSLFSTLAVALTLSGCWDKKQDEANAIQFNVNPIEITNYDETPKEVYPLVISFSGPAAPITSVNKELTQGISIEPALKGKWVWNSDTLLSFKPETDWPTGQDYRVKIDKKILNPQLHYTQKLNEPVVFKTPEFKATLVEQYFHQDPTQAQVRHAIFKLSFTHPVDRQKFEKALQVNLVRKNNDNTQNILSPLKFNVRYGEKDLVAWVNSDNVALAQSDNQYIEVKIDKNLTALLGNNSLETDIISSVKVPTKYSLDFSTGILIAQNEKNEAEQVLHLNFTHSIKGNELEKHISAYLLPEFTPENHPHWRYNLISRDVLQHAVAVPLQRLATETTYANQQSFKLDIPEKRCLYIEVQNKITALGGYEMKGALGDLACAPDYPKYVGFVGKGSILSSIGERKVTIATRNFTKVKLEIGRIQEEQLRHLIALNQGNFQNPDLGQLKIDNIADFFTKNYTLNNKKPQETTYLGIDLEKIVKQAEPAMGIYWLKVTGDSDNPNSTLRDTSQHMDWRNDASNQFSDYRLIVISDLGVIAKKAVDGTQSVFVQSISRGEPVEGATVSVISRNGSIIKSDYTNEQGVVNFSSLAHFKQELAPVMYLVSTQESLSFLPIDKYDRNLDYSRFDVGGIYASENAASLKAYLFNDRGIYRPNETLHTGIITKAQDWQLALNNIPLQFNLYSPSGMLMHKQTIRLEKSGLNSVSFTLPETAETGEWFAELLVTEKNNQTEIGSMTFQVQEFQPDNLKIKTTFNQAHAEGWVAPQDLVATVQLANLFGTPAQNRKVQANLTLQPLLPKFSQYADYRFFDNQRNKSAILYETELNEQVTDKEGKAHFPIDLTQYAENTAQMLYFTADGFENDSGRAVSTVKSVMVSAQPWLIGYQTKNDLAYLKRNTPAVVNFIAVNPKLEKVAVEHLKATLLERKYVSVLTQQASGAYKYESKLIENEIEQTTLQINATGTDFTLNTGKSGDYVLVLSNEHDQEVNRIHYAVIGNQNVSVAMDKNTELKLRLNKKQFKPHEEIEIAIHAPYAGTGLITIESDRVYAHKWFKATTNSSVQRIQLPENFEGTGYVNVQFSRDIHSDDIFTSPLSYGVVPFTVNVDNRRLKLQLDSPKKVKSGETVEFKLSSDKPSKALIYAVNEGILQVAGYQFTDPLSYFFPKYALQVQTAQILDLILPEFSKVMQFAQTGGDADMNMELAMKMAMANMNPFKRKTDKPVAYWSGIVDIHGEKTVSYQIPEEFNGNLKVMAIALSHDGKHLGHVATETLVRNDLILSPTVPLTLTPGDESEINVVIANNTNKAQRVNLKATLEPQLSFIGEAEKVIDIAPMSESRADFVIKATQELGSSTIRFIASYEDAQQQKVDAVRHVTLSVRPIMPKQFATQIQKVAAGKTVTSPLPMTLFPQHRQQSALFSAAPLALAQGVSTYLTHYDNYCTEQMISAAMPMVLFSKNPAYQPLLTALSRKAPQNVGSTGTHDTLEKAFKLLPSRQTEYGNYGIWNNVEEGNLFVTAYVAHFLIEARERHLVLPKAWFGQHGLFNNTISALEEQSVPQEGDSLATLRQRAYSAYLLTRLAKVPSNALLSIRTQLEQQFSAEEWQKDTVSAWLAAAYHMLKQDNEANKLIEPVINQLVAARPAQWTYDAYSDPLIKDSTMLYVIARHFPAQLSKVSDSVLERIVQDLNQQRYNTLSSSMVLLALDAYAQQHQSELANLQIQHQGKEISQSTPLFRFADLADTQMDISFVNNSQQPAWFALSQVGYPQNAAQQALSQGLEVDRSYTDKEGKPIRQVKIGDVIYVTVKIRASTDYVSDVIITDLYPAGFEVLWQQGAEDDFEDSWLAQHTELREDRLLSYLDAEKEMKVLKYQLKAVNIGTFQIPPIYAESMYDRAIKAYSASEGQIKVRK.

The first 21 residues, 1-21, serve as a signal peptide directing secretion; that stretch reads MNKQYFLSLFSTLAVALTLSG. Cys22 carries the N-palmitoyl cysteine lipid modification. The S-diacylglycerol cysteine moiety is linked to residue Cys22. Residues 1438-1441 constitute a cross-link (isoglutamyl cysteine thioester (Cys-Gln)); it reads CTEQ.

It belongs to the protease inhibitor I39 (alpha-2-macroglobulin) family. Bacterial alpha-2-macroglobulin subfamily.

The protein resides in the cell membrane. In terms of biological role, protects the bacterial cell from host peptidases. The protein is Alpha-2-macroglobulin of Pasteurella multocida (strain Pm70).